Consider the following 238-residue polypeptide: Tritrans,polycis-undecaprenyl-diphosphate synthase (geranylgeranyl-diphosphate specific) (238 aa).

Asp18 is a catalytic residue. Residue Asp18 participates in Mg(2+) binding. Substrate is bound by residues 19-22 (GNRR) and 64-66 (STE). The Proton acceptor role is filled by Asn67. Residues Arg70, Arg187, and 193–195 (RLS) contribute to the substrate site. Glu206 lines the Mg(2+) pocket.

Belongs to the UPP synthase family. Homodimer. Requires Mg(2+) as cofactor.

It carries out the reaction geranylgeranyl diphosphate + 7 isopentenyl diphosphate = tri-trans,hepta-cis-undecaprenyl diphosphate + 7 diphosphate. Its function is as follows. Catalyzes the sequential condensation of isopentenyl diphosphate (IPP) with geranylgeranyl diphosphate (GGPP) to yield (2Z,6Z,10Z,14Z,18Z,22Z,26Z,30E,34E,38E)-undecaprenyl diphosphate (tritrans,heptacis-UPP). It is probably the precursor of glycosyl carrier lipids. This is Tritrans,polycis-undecaprenyl-diphosphate synthase (geranylgeranyl-diphosphate specific) from Pyrobaculum aerophilum (strain ATCC 51768 / DSM 7523 / JCM 9630 / CIP 104966 / NBRC 100827 / IM2).